The primary structure comprises 549 residues: Formate--tetrahydrofolate ligase (549 aa).

60 to 67 (TPYGEGKT) contacts ATP.

The protein belongs to the formate--tetrahydrofolate ligase family.

The enzyme catalyses (6S)-5,6,7,8-tetrahydrofolate + formate + ATP = (6R)-10-formyltetrahydrofolate + ADP + phosphate. The protein operates within one-carbon metabolism; tetrahydrofolate interconversion. This Campylobacter concisus (strain 13826) protein is Formate--tetrahydrofolate ligase.